Here is a 31-residue protein sequence, read N- to C-terminus: Cytochrome b6-f complex subunit 6 (31 aa).

Residues 4-24 form a helical membrane-spanning segment; that stretch reads ITSYFGFLLAALTITSVLFIG.

The protein belongs to the PetL family. In terms of assembly, the 4 large subunits of the cytochrome b6-f complex are cytochrome b6, subunit IV (17 kDa polypeptide, PetD), cytochrome f and the Rieske protein, while the 4 small subunits are PetG, PetL, PetM and PetN. The complex functions as a dimer.

It is found in the plastid. The protein localises to the chloroplast thylakoid membrane. Component of the cytochrome b6-f complex, which mediates electron transfer between photosystem II (PSII) and photosystem I (PSI), cyclic electron flow around PSI, and state transitions. PetL is important for photoautotrophic growth as well as for electron transfer efficiency and stability of the cytochrome b6-f complex. This chain is Cytochrome b6-f complex subunit 6, found in Lepidium virginicum (Virginia pepperweed).